The sequence spans 295 residues: MTDYLVRAIAKSGSVRALACVTTATVGAICKRHDTLPTATAALGRGITAGALMGALLKTGQRVAMRFEGNGPLKKIVIEADANGSVRGYVGDPKVHLLRPDGALDVNNALGRAGFLTVAKDLGLKEPYRGTVQLYTSGIAEDLALYLVESEQIPSAVGIAEFIEQDGTVAAAGGFLIQAVPPVDPLVIEELMTRIEQLPPLSELLHKGGNPEQILEQLLAGIPYDILEKRNIAFACSCSRERIERVLLSMGKKELSSMKKDQHGSEVTCEFCGEHYLFDEADLDRIIAEIAKQEG.

2 cysteine pairs are disulfide-bonded: Cys236–Cys238 and Cys269–Cys272.

Belongs to the HSP33 family. Under oxidizing conditions two disulfide bonds are formed involving the reactive cysteines. Under reducing conditions zinc is bound to the reactive cysteines and the protein is inactive.

It is found in the cytoplasm. Functionally, redox regulated molecular chaperone. Protects both thermally unfolding and oxidatively damaged proteins from irreversible aggregation. Plays an important role in the bacterial defense system toward oxidative stress. The sequence is that of 33 kDa chaperonin from Citrifermentans bemidjiense (strain ATCC BAA-1014 / DSM 16622 / JCM 12645 / Bem) (Geobacter bemidjiensis).